The following is a 102-amino-acid chain: MYAIIATGGKQYKVSEGDIITIEKLGVEAGEKVTFDQVLVVGGDDLKVGDPTVAGATVEASVVKEGRAKKVIVYKYKRKTGYHKKNGHRQAFTQVKIEKING.

This sequence belongs to the bacterial ribosomal protein bL21 family. Part of the 50S ribosomal subunit. Contacts protein L20.

Functionally, this protein binds to 23S rRNA in the presence of protein L20. This Agathobacter rectalis (strain ATCC 33656 / DSM 3377 / JCM 17463 / KCTC 5835 / VPI 0990) (Eubacterium rectale) protein is Large ribosomal subunit protein bL21.